We begin with the raw amino-acid sequence, 278 residues long: D-aminoacyl-tRNA deacylase (278 aa).

The protein belongs to the DtdA deacylase family. In terms of assembly, monomer. Zn(2+) serves as cofactor.

It carries out the reaction a D-aminoacyl-tRNA + H2O = a tRNA + a D-alpha-amino acid + H(+). It catalyses the reaction glycyl-tRNA(Ala) + H2O = tRNA(Ala) + glycine + H(+). Its function is as follows. D-aminoacyl-tRNA deacylase with broad substrate specificity. By recycling D-aminoacyl-tRNA to D-amino acids and free tRNA molecules, this enzyme counteracts the toxicity associated with the formation of D-aminoacyl-tRNA entities in vivo. This Archaeoglobus fulgidus (strain ATCC 49558 / DSM 4304 / JCM 9628 / NBRC 100126 / VC-16) protein is D-aminoacyl-tRNA deacylase.